Consider the following 451-residue polypeptide: Signal recognition particle protein (451 aa).

GTP-binding positions include 107–114 (GLQGSGKT), 190–194 (DTAGR), and 248–251 (TKTD).

This sequence belongs to the GTP-binding SRP family. SRP54 subfamily. As to quaternary structure, part of the signal recognition particle protein translocation system, which is composed of SRP and FtsY. SRP is a ribonucleoprotein composed of Ffh and a 4.5S RNA molecule.

It localises to the cytoplasm. It catalyses the reaction GTP + H2O = GDP + phosphate + H(+). In terms of biological role, involved in targeting and insertion of nascent membrane proteins into the cytoplasmic membrane. Binds to the hydrophobic signal sequence of the ribosome-nascent chain (RNC) as it emerges from the ribosomes. The SRP-RNC complex is then targeted to the cytoplasmic membrane where it interacts with the SRP receptor FtsY. Interaction with FtsY leads to the transfer of the RNC complex to the Sec translocase for insertion into the membrane, the hydrolysis of GTP by both Ffh and FtsY, and the dissociation of the SRP-FtsY complex into the individual components. The chain is Signal recognition particle protein from Buchnera aphidicola subsp. Acyrthosiphon pisum (strain APS) (Acyrthosiphon pisum symbiotic bacterium).